The following is a 487-amino-acid chain: Glutamyl-tRNA(Gln) amidotransferase subunit A (487 aa).

Residues Lys75 and Ser150 each act as charge relay system in the active site. Residue Ser174 is the Acyl-ester intermediate of the active site.

This sequence belongs to the amidase family. GatA subfamily. As to quaternary structure, heterotrimer of A, B and C subunits.

The catalysed reaction is L-glutamyl-tRNA(Gln) + L-glutamine + ATP + H2O = L-glutaminyl-tRNA(Gln) + L-glutamate + ADP + phosphate + H(+). Its function is as follows. Allows the formation of correctly charged Gln-tRNA(Gln) through the transamidation of misacylated Glu-tRNA(Gln) in organisms which lack glutaminyl-tRNA synthetase. The reaction takes place in the presence of glutamine and ATP through an activated gamma-phospho-Glu-tRNA(Gln). The polypeptide is Glutamyl-tRNA(Gln) amidotransferase subunit A (Deinococcus deserti (strain DSM 17065 / CIP 109153 / LMG 22923 / VCD115)).